Here is a 185-residue protein sequence, read N- to C-terminus: Elongation factor P (185 aa).

The protein belongs to the elongation factor P family.

Its subcellular location is the cytoplasm. It functions in the pathway protein biosynthesis; polypeptide chain elongation. Its function is as follows. Involved in peptide bond synthesis. Stimulates efficient translation and peptide-bond synthesis on native or reconstituted 70S ribosomes in vitro. Probably functions indirectly by altering the affinity of the ribosome for aminoacyl-tRNA, thus increasing their reactivity as acceptors for peptidyl transferase. This chain is Elongation factor P, found in Clostridioides difficile (strain 630) (Peptoclostridium difficile).